We begin with the raw amino-acid sequence, 209 residues long: Dual specificity protein phosphatase 22 (209 aa).

One can recognise a Tyrosine-protein phosphatase domain in the interval 4–144 (GMNKILPSLF…LEDFGKHDVY (141 aa)). Cysteine 88 (phosphocysteine intermediate) is an active-site residue. Residues 170-193 (DKHKQQEAAESQSATSSGRQWSSH) form a disordered region. The span at 177–193 (AAESQSATSSGRQWSSH) shows a compositional bias: low complexity.

The protein belongs to the protein-tyrosine phosphatase family. Non-receptor class dual specificity subfamily.

The protein localises to the cytoplasm. Its subcellular location is the nucleus. It catalyses the reaction O-phospho-L-tyrosyl-[protein] + H2O = L-tyrosyl-[protein] + phosphate. The enzyme catalyses O-phospho-L-seryl-[protein] + H2O = L-seryl-[protein] + phosphate. The catalysed reaction is O-phospho-L-threonyl-[protein] + H2O = L-threonyl-[protein] + phosphate. In terms of biological role, activates the Jnk signaling pathway. Dephosphorylates and deactivates p38 and stress-activated protein kinase/c-Jun N-terminal kinase (SAPK/JNK). In Xenopus tropicalis (Western clawed frog), this protein is Dual specificity protein phosphatase 22 (dusp22).